A 538-amino-acid polypeptide reads, in one-letter code: Bifunctional purine biosynthesis protein PurH (538 aa).

The MGS-like domain maps to 8 to 158 (IPAPDKVEIK…KNHAYVTILT (151 aa)).

This sequence belongs to the PurH family.

The catalysed reaction is (6R)-10-formyltetrahydrofolate + 5-amino-1-(5-phospho-beta-D-ribosyl)imidazole-4-carboxamide = 5-formamido-1-(5-phospho-D-ribosyl)imidazole-4-carboxamide + (6S)-5,6,7,8-tetrahydrofolate. The enzyme catalyses IMP + H2O = 5-formamido-1-(5-phospho-D-ribosyl)imidazole-4-carboxamide. The protein operates within purine metabolism; IMP biosynthesis via de novo pathway; 5-formamido-1-(5-phospho-D-ribosyl)imidazole-4-carboxamide from 5-amino-1-(5-phospho-D-ribosyl)imidazole-4-carboxamide (10-formyl THF route): step 1/1. It participates in purine metabolism; IMP biosynthesis via de novo pathway; IMP from 5-formamido-1-(5-phospho-D-ribosyl)imidazole-4-carboxamide: step 1/1. The protein is Bifunctional purine biosynthesis protein PurH of Rhizobium etli (strain CIAT 652).